Consider the following 160-residue polypeptide: Ribosome maturation factor RimP (160 aa).

It belongs to the RimP family.

It localises to the cytoplasm. In terms of biological role, required for maturation of 30S ribosomal subunits. The chain is Ribosome maturation factor RimP from Geobacter sp. (strain M21).